A 96-amino-acid polypeptide reads, in one-letter code: Integration host factor subunit beta (96 aa).

This sequence belongs to the bacterial histone-like protein family. Heterodimer of an alpha and a beta chain.

In terms of biological role, this protein is one of the two subunits of integration host factor, a specific DNA-binding protein that functions in genetic recombination as well as in transcriptional and translational control. This is Integration host factor subunit beta from Photobacterium profundum (strain SS9).